Reading from the N-terminus, the 645-residue chain is Meiosis induction protein kinase IME2/SME1 (645 aa).

Positions 1 to 24 (MVEKRSRQSSSSGSEFSVPPDVDN) are disordered. A compositionally biased stretch (low complexity) spans 8–17 (QSSSSGSEFS). Residues 38–386 (YQLIEKLGAG…AQELCEMPFF (349 aa)) form the Protein kinase domain. ATP contacts are provided by residues 44-52 (LGAGSFGCV) and Lys-67. The active-site Proton acceptor is Asp-193.

It belongs to the protein kinase superfamily. Ser/Thr protein kinase family.

The catalysed reaction is L-seryl-[protein] + ATP = O-phospho-L-seryl-[protein] + ADP + H(+). The enzyme catalyses L-threonyl-[protein] + ATP = O-phospho-L-threonyl-[protein] + ADP + H(+). Its function is as follows. Protein kinase which is essential for the initiation of meiosis and sporulation. This chain is Meiosis induction protein kinase IME2/SME1 (IME2), found in Saccharomyces cerevisiae (strain ATCC 204508 / S288c) (Baker's yeast).